We begin with the raw amino-acid sequence, 244 residues long: Ubiquitin carboxyl-terminal hydrolase mug105 (244 aa).

C42 serves as the catalytic Nucleophile. The active-site Proton acceptor is the H165. The active site involves D183.

The protein belongs to the peptidase C78 family. ZUFSP subfamily.

The protein localises to the cytoplasm. It carries out the reaction Thiol-dependent hydrolysis of ester, thioester, amide, peptide and isopeptide bonds formed by the C-terminal Gly of ubiquitin (a 76-residue protein attached to proteins as an intracellular targeting signal).. Deubiquitinase with endodeubiquitinase activity that preferentially cleaves 'Lys-48'-linked polyubiquitin chains. Shows only weak activity against 'Lys-63' and 'Lys-11'-linked chains. Has a role in meiosis. This Schizosaccharomyces pombe (strain 972 / ATCC 24843) (Fission yeast) protein is Ubiquitin carboxyl-terminal hydrolase mug105 (mug105).